The following is a 292-amino-acid chain: Ribosomal RNA small subunit methyltransferase A (292 aa).

The S-adenosyl-L-methionine site is built by Asn28, Leu30, Gly55, Glu76, Asp101, and Asn126.

Belongs to the class I-like SAM-binding methyltransferase superfamily. rRNA adenine N(6)-methyltransferase family. RsmA subfamily.

It is found in the cytoplasm. The catalysed reaction is adenosine(1518)/adenosine(1519) in 16S rRNA + 4 S-adenosyl-L-methionine = N(6)-dimethyladenosine(1518)/N(6)-dimethyladenosine(1519) in 16S rRNA + 4 S-adenosyl-L-homocysteine + 4 H(+). In terms of biological role, specifically dimethylates two adjacent adenosines (A1518 and A1519) in the loop of a conserved hairpin near the 3'-end of 16S rRNA in the 30S particle. May play a critical role in biogenesis of 30S subunits. The chain is Ribosomal RNA small subunit methyltransferase A from Bacillus anthracis.